We begin with the raw amino-acid sequence, 184 residues long: Shikimate kinase (184 aa).

An ATP-binding site is contributed by 17–22 (GAGKTT). Thr21 is a Mg(2+) binding site. Substrate-binding residues include Asp39, Arg63, and Gly85. Arg123 contacts ATP. Arg142 provides a ligand contact to substrate.

It belongs to the shikimate kinase family. In terms of assembly, monomer. Requires Mg(2+) as cofactor.

The protein resides in the cytoplasm. The enzyme catalyses shikimate + ATP = 3-phosphoshikimate + ADP + H(+). It participates in metabolic intermediate biosynthesis; chorismate biosynthesis; chorismate from D-erythrose 4-phosphate and phosphoenolpyruvate: step 5/7. Functionally, catalyzes the specific phosphorylation of the 3-hydroxyl group of shikimic acid using ATP as a cosubstrate. This is Shikimate kinase from Burkholderia thailandensis (strain ATCC 700388 / DSM 13276 / CCUG 48851 / CIP 106301 / E264).